The following is a 444-amino-acid chain: tRNA (guanine-N(7)-)-methyltransferase non-catalytic subunit TRM82 (444 aa).

WD repeat units lie at residues 1-47 (MSVI…WSDD), 48-99 (FDKI…LGAP), 100-147 (PIYS…KRFC), 148-192 (FSKR…EPIL), 193-237 (GHVS…DKWL), 238-279 (FGHK…STFD), and 308-354 (FAVS…ITFP). Residues 55–92 (RNTTAKEQQGQSSENENENKKLKSNKGDSIKRTAAKVP) are disordered. A compositionally biased stretch (basic and acidic residues) spans 71–85 (NENKKLKSNKGDSIK). At Ser93 the chain carries Phosphoserine.

Belongs to the WD repeat TRM82 family. Forms a heterodimer with the catalytic subunit TRM8.

Its subcellular location is the nucleus. It participates in tRNA modification; N(7)-methylguanine-tRNA biosynthesis. Required for the formation of N(7)-methylguanine at position 46 (m7G46) in tRNA, a modification required to maintain stability of tRNAs; its absence resulting in tRNA decay. In the complex, it is required to stabilize and induce conformational changes of the catalytic subunit. This chain is tRNA (guanine-N(7)-)-methyltransferase non-catalytic subunit TRM82, found in Saccharomyces cerevisiae (strain ATCC 204508 / S288c) (Baker's yeast).